The following is a 204-amino-acid chain: RNA-free ribonuclease P (204 aa).

It belongs to the HARP family.

It carries out the reaction Endonucleolytic cleavage of RNA, removing 5'-extranucleotides from tRNA precursor.. In terms of biological role, RNA-free RNase P that catalyzes the removal of the 5'-leader sequence from pre-tRNA to produce the mature 5'-terminus. This is RNA-free ribonuclease P from Pyrococcus horikoshii (strain ATCC 700860 / DSM 12428 / JCM 9974 / NBRC 100139 / OT-3).